A 731-amino-acid chain; its full sequence is SUN domain-containing protein 2 (731 aa).

Disordered stretches follow at residues 1 to 69 and 106 to 142; these read MSRR…SHTS and SGDL…FGSS. Residues 1-128 are LMNA-binding; sequence MSRRSQRLTR…GSESSKANGL (128 aa). Residues 1–226 lie on the Nuclear side of the membrane; the sequence is MSRRSQRLTR…SRHFSLNLKS (226 aa). Position 12 is a phosphoserine (Ser12). Over residues 18-33 the composition is skewed to low complexity; sequence GGSSSSGASSVAGSQG. Phosphoserine occurs at positions 39 and 55. Phosphothreonine is present on Thr117. Ser120, Ser123, and Ser147 each carry phosphoserine. A helical transmembrane segment spans residues 227–247; it reads FLWFLLLLLLLTGLTYGAWHF. Topologically, residues 248 to 731 are perinuclear space; the sequence is YPLGLQTLQP…RFRVHGEPAH (484 aa). Coiled-coil stretches lie at residues 396–452 and 486–519; these read QESE…VADE and RSGL…KSAR. Residues 521–731 are sufficient for interaction with SYNE1 and SYNE2; it reads AAASLGQILQ…RFRVHGEPAH (211 aa). The SUN domain maps to 569–730; the sequence is GASVISTRCS…YRFRVHGEPA (162 aa). An N-linked (GlcNAc...) asparagine glycan is attached at Asn650.

Core component of the LINC complex which is composed of inner nuclear membrane SUN domain-containing proteins coupled to outer nuclear membrane KASH domain-containing nesprins. SUN and KASH domain-containing proteins seem to bind each other promiscuously; however, differentially expression of LINC complex constituents is giving rise to specific assemblies. At least SUN1/2-containing core LINC complexes are proposed to be hexameric composed of three protomers of each KASH and SUN domain-containing protein. Interacts with SYNE2; the SUN2:SYNE2/KASH2 LINC complex is a heterohexamer; the homotrimeric cloverleave-like conformation of the SUN domain is a prerequisite for LINC complex formation in which three separate SYNE2/KASH2 peptides bind at the interface of adjacent SUN domains. Component of a probable SUN2:KASH5 LINC complex. Interacts with SYNE1 and SYNE3; probably forming respective LINC complexes. Interacts with A-type lamin. Interaction with lamins B1 and C is hardly detectable. Interacts with EMD. Interacts with RAB5A. Interacts with TMEM43 and TMEM201. Interacts with IRAG2. In terms of processing, the disulfide bond with SYNE2 is required for stability of the SUN2:SYNE2/KASH2 LINC complex under tensile forces though not required for the interaction. The disulfide bond is proposed to be conserved in LINC complexes involved in force transmission. As to expression, highly expressed in heart, placenta and muscle.

Its subcellular location is the nucleus inner membrane. It is found in the nucleus envelope. The protein localises to the endosome membrane. In terms of biological role, as a component of the LINC (LInker of Nucleoskeleton and Cytoskeleton) complex, involved in the connection between the nuclear lamina and the cytoskeleton. The nucleocytoplasmic interactions established by the LINC complex play an important role in the transmission of mechanical forces across the nuclear envelope and in nuclear movement and positioning. Specifically, SYNE2 and SUN2 assemble in arrays of transmembrane actin-associated nuclear (TAN) lines which are bound to F-actin cables and couple the nucleus to retrograde actin flow during actin-dependent nuclear movement. Required for interkinetic nuclear migration (INM) and essential for nucleokinesis and centrosome-nucleus coupling during radial neuronal migration in the cerebral cortex and during glial migration. Required for nuclear migration in retinal photoreceptor progenitors implicating association with cytoplasmic dynein-dynactin and kinesin motor complexes, and probably B-type lamins; SUN1 and SUN2 seem to act redundantly. The SUN1/2:KASH5 LINC complex couples telomeres to microtubules during meiosis; SUN1 and SUN2 seem to act at least partial redundantly. Anchors chromosome movement in the prophase of meiosis and is involved in selective gene expression of coding and non-coding RNAs needed for gametogenesis. Required for telomere attachment to nuclear envelope and gametogenesis. May also function on endocytic vesicles as a receptor for Rab5-GDP and participate in the activation of Rab5. This is SUN domain-containing protein 2 from Mus musculus (Mouse).